A 1207-amino-acid chain; its full sequence is Brassinosteroid LRR receptor kinase (1207 aa).

Positions 1–34 (MKAHKTVFNQHPLSLNKLFFVLLLIFFLPPASPA) are cleaved as a signal peptide. The Cys pair 1 motif lies at 71 to 78 (CSFTGVSC). LRR repeat units follow at residues 109–131 (NLES…AKSQ), 135–157 (TLDS…SSFG), 161–181 (NLKS…EMLK), 186–207 (SLQV…PWVS), 213–234 (ELEF…LDFK), 235–257 (NLSY…KDCS), 258–280 (NLQH…LSSC), 282–304 (KLSF…PSES), 305–325 (LQYL…QLAD), 329–350 (TVVE…SLGE), 353–374 (SLEL…DTLS), 378–400 (NIKT…FSNL), 402–423 (KLET…GICK), 428–450 (NLKV…LSNC), 452–474 (QLVS…LGSL), 476–499 (KLKD…MYLQ), 500–523 (ALEN…SNCT), 524–547 (KLNW…GRLS), 548–570 (NLAI…LGNC), and 572–594 (SLIW…LFKQ). An N-linked (GlcNAc...) asparagine glycan is attached at asparagine 119. Asparagine 166 and asparagine 196 each carry an N-linked (GlcNAc...) asparagine glycan. N-linked (GlcNAc...) asparagine glycans are attached at residues asparagine 235 and asparagine 245. Asparagine 287 carries an N-linked (GlcNAc...) asparagine glycan. N-linked (GlcNAc...) asparagine glycans are attached at residues asparagine 339 and asparagine 363. Residues asparagine 412 and asparagine 449 are each glycosylated (N-linked (GlcNAc...) asparagine). N-linked (GlcNAc...) asparagine glycosylation is present at asparagine 521. Asparagine 556, asparagine 584, asparagine 646, and asparagine 662 each carry an N-linked (GlcNAc...) asparagine glycan. LRR repeat units follow at residues 664-686 (SMIF…LGAM), 688-711 (YLSI…GGLK), 712-735 (NVAI…TSLT), and 736-758 (LLGE…APFD). Asparagine 724, asparagine 746, and asparagine 767 each carry an N-linked (GlcNAc...) asparagine glycan. A Cys pair 2 motif is present at residues 771 to 779 (CGYPLPIPC). Residues 803–823 (SVAMGLLFSLFCIFGLIIVAI) form a helical membrane-spanning segment. Residues 888–1163 (FHNDSLVGSG…IQVMAMFKEI (276 aa)) enclose the Protein kinase domain. Residues 894 to 902 (VGSGGFGDV) and lysine 916 contribute to the ATP site. The active-site Proton acceptor is aspartate 1014.

Belongs to the protein kinase superfamily. Ser/Thr protein kinase family.

The protein localises to the cell membrane. It catalyses the reaction L-seryl-[protein] + ATP = O-phospho-L-seryl-[protein] + ADP + H(+). The enzyme catalyses L-threonyl-[protein] + ATP = O-phospho-L-threonyl-[protein] + ADP + H(+). Functionally, receptor with a serine/threonine-protein kinase activity. Regulates, in response to brassinosteroid binding, a signaling cascade involved in plant development, including expression of light- and stress-regulated genes, promotion of cell elongation, normal leaf and chloroplast senescence, and flowering. May be involved in a feedback regulation of brassinosteroid biosynthesis. May be also involved in the perception of systemin, a peptide hormone responsible for the systemic activation of defense genes in leaves of wounded plants. In Solanum lycopersicum (Tomato), this protein is Brassinosteroid LRR receptor kinase (CURL3).